A 693-amino-acid chain; its full sequence is Elongation factor G (693 aa).

In terms of domain architecture, tr-type G spans Glu-9–Val-283. Residues Ala-18–Thr-25, Asp-82–His-86, and Asn-136–Asp-139 contribute to the GTP site.

The protein belongs to the TRAFAC class translation factor GTPase superfamily. Classic translation factor GTPase family. EF-G/EF-2 subfamily.

The protein resides in the cytoplasm. Functionally, catalyzes the GTP-dependent ribosomal translocation step during translation elongation. During this step, the ribosome changes from the pre-translocational (PRE) to the post-translocational (POST) state as the newly formed A-site-bound peptidyl-tRNA and P-site-bound deacylated tRNA move to the P and E sites, respectively. Catalyzes the coordinated movement of the two tRNA molecules, the mRNA and conformational changes in the ribosome. The polypeptide is Elongation factor G (Dehalococcoides mccartyi (strain ATCC BAA-2266 / KCTC 15142 / 195) (Dehalococcoides ethenogenes (strain 195))).